A 545-amino-acid polypeptide reads, in one-letter code: Phenylalanine--tRNA ligase beta subunit (545 aa).

The 76-residue stretch at 268–343 folds into the B5 domain; it reads FLHKIQNVRE…MSIGYNNLEP (76 aa). Positions 321, 327, 330, and 331 each coordinate Mg(2+).

Belongs to the phenylalanyl-tRNA synthetase beta subunit family. Type 2 subfamily. As to quaternary structure, tetramer of two alpha and two beta subunits. Requires Mg(2+) as cofactor.

It localises to the cytoplasm. It carries out the reaction tRNA(Phe) + L-phenylalanine + ATP = L-phenylalanyl-tRNA(Phe) + AMP + diphosphate + H(+). This is Phenylalanine--tRNA ligase beta subunit from Saccharolobus islandicus (strain L.S.2.15 / Lassen #1) (Sulfolobus islandicus).